A 122-amino-acid chain; its full sequence is Large ribosomal subunit protein uL14 (122 aa).

The protein belongs to the universal ribosomal protein uL14 family. In terms of assembly, part of the 50S ribosomal subunit. Forms a cluster with proteins L3 and L19. In the 70S ribosome, L14 and L19 interact and together make contacts with the 16S rRNA in bridges B5 and B8.

Functionally, binds to 23S rRNA. Forms part of two intersubunit bridges in the 70S ribosome. The sequence is that of Large ribosomal subunit protein uL14 from Campylobacter fetus subsp. fetus (strain 82-40).